Reading from the N-terminus, the 255-residue chain is Thrombin-like enzyme batroxobin (255 aa).

The signal sequence occupies residues 1–18 (MVLIRVIANLLILQVSYA). A propeptide spanning residues 19-24 (QKSSEL) is cleaved from the precursor. One can recognise a Peptidase S1 domain in the interval 25-247 (VIGGDECDIN…YLPWIQSIIA (223 aa)). 6 disulfides stabilise this stretch: C31–C163, C50–C66, C98–C254, C142–C208, C174–C187, and C198–C223. Active-site charge relay system residues include H65 and D110. N170 carries N-linked (GlcNAc...) asparagine glycosylation. The Charge relay system role is filled by S202. The N-linked (GlcNAc...) asparagine glycan is linked to N249.

The protein belongs to the peptidase S1 family. Snake venom subfamily. As to quaternary structure, monomer. Expressed by the venom gland.

It localises to the secreted. The catalysed reaction is Selective cleavage of Arg-|-Xaa bond in fibrinogen, to form fibrin, and release fibrinopeptide A. The specificity of further degradation of fibrinogen varies with species origin of the enzyme.. Its function is as follows. Thrombin-like snake venom serine protease. Cleaves Arg-Gly bonds in fibrinogen alpha chains (FGA). The protein is Thrombin-like enzyme batroxobin of Bothrops atrox (Barba amarilla).